The sequence spans 424 residues: O-seryl-dTMP PLP-dependent decarboxylase (424 aa).

The protein belongs to the pyridoxal-phosphate-dependent aminodecarboxylase family.

It catalyses the reaction 5-O-(L-seryl)-dTMP in DNA + H(+) = 5-aminoethoxy-methyl-dUMP in DNA + CO2. Its function is as follows. Converts 5-O-serinylthymidine (O-SerT) into 5-aminoethoxy-2'-deoxymethyluridine (5-NeOmdU) as a step in the pathway leading to thymidine hypermodifications in the viral genome. As a final result of the pathway of hypermodification, 5-NeOmdU substitutes for about 40% of the thymidines in the viral DNA. These modifications probably prevent degradation of viral genome by the host restriction-modification antiviral defense system. The sequence is that of O-seryl-dTMP PLP-dependent decarboxylase from Salmonella phage ViI.